A 285-amino-acid chain; its full sequence is 4-diphosphocytidyl-2-C-methyl-D-erythritol kinase (285 aa).

The active site involves Lys10. Pro93 to Ser103 lines the ATP pocket. Asp135 is a catalytic residue.

Belongs to the GHMP kinase family. IspE subfamily.

The catalysed reaction is 4-CDP-2-C-methyl-D-erythritol + ATP = 4-CDP-2-C-methyl-D-erythritol 2-phosphate + ADP + H(+). It functions in the pathway isoprenoid biosynthesis; isopentenyl diphosphate biosynthesis via DXP pathway; isopentenyl diphosphate from 1-deoxy-D-xylulose 5-phosphate: step 3/6. Its function is as follows. Catalyzes the phosphorylation of the position 2 hydroxy group of 4-diphosphocytidyl-2C-methyl-D-erythritol. The polypeptide is 4-diphosphocytidyl-2-C-methyl-D-erythritol kinase (Ruthia magnifica subsp. Calyptogena magnifica).